The sequence spans 278 residues: MTVETITPQTPVSLPKTAVICNDFKLDRVNEPARSILEKYSKIPSREILEHVRKIRDEAFAEFPYPCIGRFSFLDLSISQSPKYPEILHRVVNGEKFLDLGCAFGQELRQLVYDGAPSDNLYGSDLHNGLMHLGYDLFRDVSTLKSRFIATNILEGNSDLISQLSGQMNIIYSSLFFHLFDWDQSLVIAKHVLRLLSLQPGSMITGRFVAYRDWNFAKEKLGSTLRFYFDLSSWTQLWKQVEVDTGSKLNIEHWEQSDNMLTDNGIGGYMLCFAITRQ.

Residues Asp-125–Leu-126, Asn-152–Ile-153, and Ile-153–Leu-154 contribute to the S-adenosyl-L-methionine site.

It belongs to the class I-like SAM-binding methyltransferase superfamily. In terms of assembly, homodimer.

It catalyses the reaction chermesin D + S-adenosyl-L-methionine = chermesin D methyl ester + S-adenosyl-L-homocysteine. It carries out the reaction asnovolin I + S-adenosyl-L-methionine = asnovolin K + S-adenosyl-L-homocysteine. It participates in secondary metabolite biosynthesis; terpenoid biosynthesis. In terms of biological role, methyltransferase; part of the gene cluster that mediates the biosynthesis of novofumigatonin, a heavily oxygenated meroterpenoid containing a unique orthoester moiety. The first step of the pathway is the synthesis of 3,5-dimethylorsellinic acid (DMOA) by the polyketide synthase nvfA via condensation of one acetyl-CoA starter unit with 3 malonyl-CoA units and 2 methylations. DMOA is then converted to farnesyl-DMOA by the farnesyltransferase nvfB. Epoxydation by FAD-dependent monooxygenase nvfK, followed by a protonation-initiated cyclization catalyzed by the terpene cyclase nvfL leads to the production of asnavolin H. The short chain dehydrogenase nvfC then as a 3-OH dehydrogenase of asnovolin H to yield chemesin D. There are two branches to synthesize asnovolin A from chemesin D. In one branch, chemesin D undergoes Baeyer-Villiger oxidation by nvfH, methylation by nvfJ, and enoyl reduction by the nvfM D enoylreductase that reduces the double bond between C-5'and C-6', to form respectively asnovolin I, asnovolin K, and asnovolin A. In the other branch, the methylation precedes the Baeyer-Villiger oxidation and the enoyl reduction to yield asnovolin A via the asnovolin J intermediate. Asnovolin A is further converted to fumigatonoid A by the Fe(II)/2-oxoglutarate-dependent dioxygenase nvfI that catalyzes an endoperoxidation reaction. The alpha/beta hydrolase nvfD then acts as an epimerase that converts fumigatonoid A to its C-5' epimer, which then undergoes spontaneous or nvfD-catalyzed lactonization. The following step utilizes the ketoreductase nvfG to produce fumigatonoid B. The dioxygenase nvfE further converts fumigatonoid B into fumigatonoid C. Finally the Fe(II)/2-oxoglutarate-dependent dioxygenase nvfF catalyzes two rounds of oxidation to transform fumigatonoid C into the end product, novofumigatonin A. The sequence is that of Asnovolin E/Chermesin D methyltransferase nvfJ from Aspergillus novofumigatus (strain IBT 16806).